Here is a 176-residue protein sequence, read N- to C-terminus: Inner membrane-spanning protein YciB (176 aa).

6 helical membrane-spanning segments follow: residues 3-23, 24-44, 49-69, 81-101, 121-141, and 149-169; these read FLFDLFPIILFFAAFKVWGIF, TATAVAIVATLAQVAWVAFRH, TMLWVSLGVIVVFGGATLVLH, LYWLFAIGLLAARYAFGNNLI, VAWALFFAVLGVANLYVVHNF, and FKLFGTTGAMVVFIILQSLWL.

The protein belongs to the YciB family.

The protein localises to the cell inner membrane. In terms of biological role, plays a role in cell envelope biogenesis, maintenance of cell envelope integrity and membrane homeostasis. The protein is Inner membrane-spanning protein YciB of Burkholderia lata (strain ATCC 17760 / DSM 23089 / LMG 22485 / NCIMB 9086 / R18194 / 383).